The following is a 122-amino-acid chain: Large ribosomal subunit protein uL18 (122 aa).

Over residues 1–20 the composition is skewed to basic residues; the sequence is MLKKVSKNTNRQGRHQRVRN. Residues 1-22 form a disordered region; sequence MLKKVSKNTNRQGRHQRVRNKI.

Belongs to the universal ribosomal protein uL18 family. In terms of assembly, part of the 50S ribosomal subunit; part of the 5S rRNA/L5/L18/L25 subcomplex. Contacts the 5S and 23S rRNAs.

This is one of the proteins that bind and probably mediate the attachment of the 5S RNA into the large ribosomal subunit, where it forms part of the central protuberance. The chain is Large ribosomal subunit protein uL18 from Alkaliphilus metalliredigens (strain QYMF).